The sequence spans 143 residues: Sirohydrochlorin cobaltochelatase (143 aa).

His-9 serves as the catalytic Proton acceptor. His-9 contacts Co(2+). Position 9 (His-9) interacts with Ni(2+). Substrate is bound by residues Glu-45 and 70–75; that span reads LAHGNH. His-75 is a Co(2+) binding site. Ni(2+) is bound at residue His-75.

The protein belongs to the CbiX family. CbiXS subfamily. In terms of assembly, homotetramer; dimer of dimers.

The enzyme catalyses Co-sirohydrochlorin + 2 H(+) = sirohydrochlorin + Co(2+). It carries out the reaction Ni-sirohydrochlorin + 2 H(+) = sirohydrochlorin + Ni(2+). It participates in cofactor biosynthesis; adenosylcobalamin biosynthesis; cob(II)yrinate a,c-diamide from sirohydrochlorin (anaerobic route): step 1/10. In terms of biological role, catalyzes the insertion of Co(2+) into sirohydrochlorin as part of the anaerobic pathway to cobalamin biosynthesis. Involved in the biosynthesis of the unique nickel-containing tetrapyrrole coenzyme F430, the prosthetic group of methyl-coenzyme M reductase (MCR), which plays a key role in methanogenesis and anaerobic methane oxidation. Catalyzes the insertion of Ni(2+) into sirohydrochlorin to yield Ni-sirohydrochlorin. The chain is Sirohydrochlorin cobaltochelatase from Methanococcus aeolicus (strain ATCC BAA-1280 / DSM 17508 / OCM 812 / Nankai-3).